We begin with the raw amino-acid sequence, 544 residues long: CTP synthase (544 aa).

The amidoligase domain stretch occupies residues 1-265 (MTRYIFITGG…DTQVLAYFGL (265 aa)). CTP is bound at residue serine 13. Residue serine 13 participates in UTP binding. Position 14-19 (14-19 (SLGKGL)) interacts with ATP. An L-glutamine-binding site is contributed by tyrosine 54. Aspartate 71 lines the ATP pocket. Mg(2+) contacts are provided by aspartate 71 and glutamate 139. Residues 146-148 (DIE), 186-191 (KTKPTQ), and lysine 222 contribute to the CTP site. UTP contacts are provided by residues 186–191 (KTKPTQ) and lysine 222. Valine 240 serves as a coordination point for ATP. In terms of domain architecture, Glutamine amidotransferase type-1 spans 291-543 (TIAVVGKYTS…IKAAIEQSRL (253 aa)). L-glutamine is bound at residue glycine 353. Cysteine 380 serves as the catalytic Nucleophile; for glutamine hydrolysis. Residues 381–384 (FGMQ), glutamate 404, and arginine 472 contribute to the L-glutamine site. Catalysis depends on residues histidine 516 and glutamate 518.

Belongs to the CTP synthase family. As to quaternary structure, homotetramer.

The enzyme catalyses UTP + L-glutamine + ATP + H2O = CTP + L-glutamate + ADP + phosphate + 2 H(+). It carries out the reaction L-glutamine + H2O = L-glutamate + NH4(+). The catalysed reaction is UTP + NH4(+) + ATP = CTP + ADP + phosphate + 2 H(+). It participates in pyrimidine metabolism; CTP biosynthesis via de novo pathway; CTP from UDP: step 2/2. Its activity is regulated as follows. Allosterically activated by GTP, when glutamine is the substrate; GTP has no effect on the reaction when ammonia is the substrate. The allosteric effector GTP functions by stabilizing the protein conformation that binds the tetrahedral intermediate(s) formed during glutamine hydrolysis. Inhibited by the product CTP, via allosteric rather than competitive inhibition. In terms of biological role, catalyzes the ATP-dependent amination of UTP to CTP with either L-glutamine or ammonia as the source of nitrogen. Regulates intracellular CTP levels through interactions with the four ribonucleotide triphosphates. The protein is CTP synthase of Azospirillum brasilense.